The following is a 346-amino-acid chain: tRNA N6-adenosine threonylcarbamoyltransferase (346 aa).

Positions 117, 121, and 138 each coordinate a divalent metal cation. Residues 138-142 (YVSGG), Asp-170, Gly-185, and Asn-277 contribute to the substrate site. Asp-305 contacts a divalent metal cation.

The protein belongs to the KAE1 / TsaD family. Component of the EKC/KEOPS complex composed of at least SPAP27G11.07c/BUD32, cgi121, gon7, pgp2 and SPAC4H3.13/PCC1; the whole complex dimerizes. A divalent metal cation is required as a cofactor.

Its subcellular location is the cytoplasm. It localises to the nucleus. It carries out the reaction L-threonylcarbamoyladenylate + adenosine(37) in tRNA = N(6)-L-threonylcarbamoyladenosine(37) in tRNA + AMP + H(+). Functionally, component of the EKC/KEOPS complex that is required for the formation of a threonylcarbamoyl group on adenosine at position 37 (t(6)A37) in tRNAs that read codons beginning with adenine. The complex is probably involved in the transfer of the threonylcarbamoyl moiety of threonylcarbamoyl-AMP (TC-AMP) to the N6 group of A37. Pgp2 likely plays a direct catalytic role in this reaction, but requires other protein(s) of the complex to fulfill this activity. The EKC/KEOPS complex also promotes both telomere uncapping and telomere elongation. The complex is required for efficient recruitment of transcriptional coactivators. This chain is tRNA N6-adenosine threonylcarbamoyltransferase (pgp2), found in Schizosaccharomyces pombe (strain 972 / ATCC 24843) (Fission yeast).